Here is a 103-residue protein sequence, read N- to C-terminus: Small ribosomal subunit protein uS10 (103 aa).

This sequence belongs to the universal ribosomal protein uS10 family. Part of the 30S ribosomal subunit.

Involved in the binding of tRNA to the ribosomes. This chain is Small ribosomal subunit protein uS10, found in Shewanella pealeana (strain ATCC 700345 / ANG-SQ1).